A 180-amino-acid chain; its full sequence is UPF0227 protein YpsIP31758_1593 (180 aa).

The protein belongs to the UPF0227 family.

The sequence is that of UPF0227 protein YpsIP31758_1593 from Yersinia pseudotuberculosis serotype O:1b (strain IP 31758).